The primary structure comprises 240 residues: Probable transcriptional regulatory protein MADE_1004275 (240 aa).

This sequence belongs to the TACO1 family.

The protein resides in the cytoplasm. The sequence is that of Probable transcriptional regulatory protein MADE_1004275 from Alteromonas mediterranea (strain DSM 17117 / CIP 110805 / LMG 28347 / Deep ecotype).